The primary structure comprises 256 residues: 5-oxoprolinase subunit A (256 aa).

The protein belongs to the LamB/PxpA family. Forms a complex composed of PxpA, PxpB and PxpC.

It carries out the reaction 5-oxo-L-proline + ATP + 2 H2O = L-glutamate + ADP + phosphate + H(+). Functionally, catalyzes the cleavage of 5-oxoproline to form L-glutamate coupled to the hydrolysis of ATP to ADP and inorganic phosphate. This chain is 5-oxoprolinase subunit A, found in Cutibacterium acnes (strain DSM 16379 / KPA171202) (Propionibacterium acnes).